Consider the following 494-residue polypeptide: UPF0371 protein spyM18_1356 (494 aa).

The protein belongs to the UPF0371 family.

This chain is UPF0371 protein spyM18_1356, found in Streptococcus pyogenes serotype M18 (strain MGAS8232).